A 399-amino-acid chain; its full sequence is Phosphoglycerate kinase (399 aa).

Substrate is bound by residues D22–N24, R38, H61–R64, R120, and R153. ATP is bound by residues K204, E326, and G352 to T355.

The protein belongs to the phosphoglycerate kinase family. In terms of assembly, monomer.

Its subcellular location is the cytoplasm. It catalyses the reaction (2R)-3-phosphoglycerate + ATP = (2R)-3-phospho-glyceroyl phosphate + ADP. It functions in the pathway carbohydrate degradation; glycolysis; pyruvate from D-glyceraldehyde 3-phosphate: step 2/5. In Citrifermentans bemidjiense (strain ATCC BAA-1014 / DSM 16622 / JCM 12645 / Bem) (Geobacter bemidjiensis), this protein is Phosphoglycerate kinase.